Here is a 519-residue protein sequence, read N- to C-terminus: MMRSLHSLRRMSGTVLALMLAAGLPLSAAQAQPAKPAPKGDQKPATPAPSEQFVDGIAAIVNKDVITLREVREASKLASADLQKRGIQVPDERTLQKQVLQRLIMERLERQEADRMGIRVDEAQVDQAINMIASRNKITPAAMRAEIEKSGVTWEQYRKSLRDDIRMDRLRQRAVDANIIISDAEVDAFLKDQERNPAAAQATRAPAPQQPQPQPRQPAQSGPAMLVLAQILVRVPEGSSPDQVAALRKKAEGLLARAKKGDDFASLAAANSDGPEALQGGMMGARPLDGWPDLFVKAAGSLSAGQVSGLVQSGNGFHILKVVDRAGGGQPAQAARPAPAPAPQQPSSFQEGPSVAAPQGPVRVTQTHARHILIKTSTVMTDDQARQRLEQIRERLQGGAVKFEDMARQYSQDSTAPQGGDLGWVNPGDTVPPFEAAMNALQPNEISPPVLSPFGWHLIQVLERREHDVSDEVQRMRARQLLFERRAVPAFEDWLEQLRSQAFIDNRLEKQERLEQNNR.

An N-terminal signal peptide occupies residues 1 to 31 (MMRSLHSLRRMSGTVLALMLAAGLPLSAAQA). Low complexity-rich tracts occupy residues 31–45 (AQPA…QKPA) and 197–207 (PAAAQATRAPA). 2 disordered regions span residues 31-50 (AQPA…PAPS) and 196-221 (NPAA…PAQS). Residues 223–324 (PAMLVLAQIL…NGFHILKVVD (102 aa)) form the PpiC 1 domain. Positions 328-361 (GGQPAQAARPAPAPAPQQPSSFQEGPSVAAPQGP) are disordered. Positions 364–463 (VTQTHARHIL…FGWHLIQVLE (100 aa)) constitute a PpiC 2 domain.

It localises to the periplasm. The catalysed reaction is [protein]-peptidylproline (omega=180) = [protein]-peptidylproline (omega=0). Chaperone involved in the correct folding and assembly of outer membrane proteins. Recognizes specific patterns of aromatic residues and the orientation of their side chains, which are found more frequently in integral outer membrane proteins. May act in both early periplasmic and late outer membrane-associated steps of protein maturation. In Bordetella bronchiseptica (strain ATCC BAA-588 / NCTC 13252 / RB50) (Alcaligenes bronchisepticus), this protein is Chaperone SurA.